The primary structure comprises 186 residues: Ribosome-recycling factor (186 aa).

This sequence belongs to the RRF family.

It localises to the cytoplasm. Its function is as follows. Responsible for the release of ribosomes from messenger RNA at the termination of protein biosynthesis. May increase the efficiency of translation by recycling ribosomes from one round of translation to another. The sequence is that of Ribosome-recycling factor from Polynucleobacter asymbioticus (strain DSM 18221 / CIP 109841 / QLW-P1DMWA-1) (Polynucleobacter necessarius subsp. asymbioticus).